Here is a 213-residue protein sequence, read N- to C-terminus: Large ribosomal subunit protein mL67 (213 aa).

This sequence belongs to the mitochondrion-specific ribosomal protein mL67 family.

Its subcellular location is the nucleus. The protein localises to the mitochondrion. Functionally, transcription factor involved in regulation of RNA polymerase II-dependent transcription. Also involved in regulation of mitochondrial DNA recombination, maintenance and repair, and generation of homoplasmic cells. This is Large ribosomal subunit protein mL67 (MHR1) from Eremothecium gossypii (strain ATCC 10895 / CBS 109.51 / FGSC 9923 / NRRL Y-1056) (Yeast).